The following is a 368-amino-acid chain: C-X-C chemokine receptor type 3 (368 aa).

Residues 1–53 (MVLEVSDHQVLNDAEVAALLENFSSSYDYGENESDSCCTSPPCPQDFSLNFDR) are Extracellular-facing. An N-linked (GlcNAc...) asparagine glycan is attached at N22. Y27 and Y29 each carry sulfotyrosine. The N-linked (GlcNAc...) asparagine glycan is linked to N32. A helical membrane pass occupies residues 54 to 80 (AFLPALYSLLFLLGLLGNGAVAAVLLS). Topologically, residues 81–89 (RRTALSSTD) are cytoplasmic. A helical membrane pass occupies residues 90 to 110 (TFLLHLAVADTLLVLTLPLWA). Residues 111-125 (VDAAVQWVFGSGLCK) lie on the Extracellular side of the membrane. C124 and C203 are oxidised to a cystine. The helical transmembrane segment at 126–147 (VAGALFNINFYAGALLLACISF) threads the bilayer. The Cytoplasmic segment spans residues 148-169 (DRYLNIVHATQLYRRGPPARVT). The chain crosses the membrane as a helical span at residues 170 to 189 (LTCLAVWGLCLLFALPDFIF). Topologically, residues 190–212 (LSAHHDERLNATHCQYNFPQVGR) are extracellular. A helical membrane pass occupies residues 213-233 (TALRVLQLVAGFLLPLLVMAY). Residues 234–255 (CYAHILAVLLVSRGQRRLRAMR) lie on the Cytoplasmic side of the membrane. A helical membrane pass occupies residues 256–277 (LVVVVVVAFALCWTPYHLVVLV). Residues 278–298 (DILMDLGALARNCGRESRVDV) are Extracellular-facing. Residues 299–321 (AKSVTSGLGYMHCCLNPLLYAFV) form a helical membrane-spanning segment. Residues 322 to 368 (GVKFRERMWMLLLRLGCPNQRGLQRQPSSSRRDSSWSETSEASYSGL) lie on the Cytoplasmic side of the membrane. A disordered region spans residues 342-368 (RGLQRQPSSSRRDSSWSETSEASYSGL). Residues 357-368 (WSETSEASYSGL) show a composition bias toward low complexity.

Belongs to the G-protein coupled receptor 1 family. Homomer. Forms heteromers with ACKR4. As to quaternary structure, interacts with PF4/CXCL4. Post-translationally, sulfation on Tyr-27 and Tyr-29 is essential for CXCL10 binding and subsequent signal transduction induction. N-glycosylated. In terms of tissue distribution, isoform 1 and isoform 2 are mainly expressed in heart, kidney, liver and skeletal muscle. Isoform 1 is also expressed in placenta. Isoform 2 is expressed in endothelial cells. Expressed in T-cells (at protein level).

It is found in the cell membrane. In terms of biological role, receptor for the C-X-C chemokine CXCL9, CXCL10 and CXCL11 and mediates the proliferation, survival and angiogenic activity of human mesangial cells (HMC) through a heterotrimeric G-protein signaling pathway. Binds to CCL21. Probably promotes cell chemotaxis response. Upon activation by PF4, induces activated T-lymphocytes migration mediated via downstream Ras/extracellular signal-regulated kinase (ERK) signaling. Receptor for the C-X-C chemokine CXCL4 and also mediates the inhibitory activities of CXCL9, CXCL10 and CXCL11 on the proliferation, survival and angiogenic activity of human microvascular endothelial cells (HMVEC) through a cAMP-mediated signaling pathway. Does not promote cell chemotaxis respons. Interaction with CXCL4 or CXCL10 leads to activation of the p38MAPK pathway and contributes to inhibition of angiogenesis. Overexpression in renal cancer cells down-regulates expression of the anti-apoptotic protein HMOX1 and promotes apoptosis. Functionally, mediates the activity of CXCL11. In Homo sapiens (Human), this protein is C-X-C chemokine receptor type 3 (CXCR3).